The following is a 303-amino-acid chain: Phenoloxidase-activating factor 2 (303 aa).

Residues 1–24 (PDRRPPEDPITPPPPTKEEQRAGC) form a disordered region. The Peptidase S1 domain occupies 36 to 292 (IIGDKDGEAK…LRDWIDDKVA (257 aa)). Intrachain disulfides connect cysteine 173-cysteine 247, cysteine 206-cysteine 227, and cysteine 237-cysteine 268.

It belongs to the peptidase S1 family. In terms of assembly, heterodimer.

The protein resides in the secreted. Its function is as follows. Binds and activates processed prophenoloxidases PPO1 and PPO2 and thus is involved in the activation of the prophenoloxidase cascade probably following the recognition of pathogen-derived products. Binds the A.niger cell wall component alpha-1,3-glucan, a fungal pathogen-associated molecular pattern (PAMP) that activates the host immune response. The sequence is that of Phenoloxidase-activating factor 2 (LOC113510063) from Galleria mellonella (Greater wax moth).